Consider the following 379-residue polypeptide: Cytochrome b (379 aa).

Helical transmembrane passes span 33 to 53, 77 to 98, 113 to 133, and 178 to 198; these read FGSLLGMCLVLQIFTGLFLAM, WLIRYMHANGASLFFICLYIHI, WNIGILLLFLTMATAFVGYVL, and FFAFHFILPFIIAALATVHLL. Heme b contacts are provided by His83 and His97. His182 and His196 together coordinate heme b. His201 contributes to the a ubiquinone binding site. A run of 4 helical transmembrane segments spans residues 226 to 246, 288 to 308, 320 to 340, and 347 to 367; these read TKDFLGALIXIMFFMTLVLYF, LGGVVALILSILVLALLPYIH, ISQFLFWTLVSDLLLLTWIGG, and FIIIGQTASXMYFTIILIXMX.

Belongs to the cytochrome b family. The cytochrome bc1 complex contains 11 subunits: 3 respiratory subunits (MT-CYB, CYC1 and UQCRFS1), 2 core proteins (UQCRC1 and UQCRC2) and 6 low-molecular weight proteins (UQCRH/QCR6, UQCRB/QCR7, UQCRQ/QCR8, UQCR10/QCR9, UQCR11/QCR10 and a cleavage product of UQCRFS1). This cytochrome bc1 complex then forms a dimer. The cofactor is heme b.

The protein localises to the mitochondrion inner membrane. Its function is as follows. Component of the ubiquinol-cytochrome c reductase complex (complex III or cytochrome b-c1 complex) that is part of the mitochondrial respiratory chain. The b-c1 complex mediates electron transfer from ubiquinol to cytochrome c. Contributes to the generation of a proton gradient across the mitochondrial membrane that is then used for ATP synthesis. In Thomomys umbrinus (Southern pocket gopher), this protein is Cytochrome b (MT-CYB).